Reading from the N-terminus, the 1269-residue chain is Protein flightless-1 homolog (1269 aa).

At Met-1 the chain carries N-acetylmethionine. Residues 1-427 (MEATGVLPFV…SGPKDPMARK (427 aa)) form an interaction with LRRFIP1 and LRRFIP2 region. LRR repeat units lie at residues 7–32 (LPFVRGVDLSGNDFKGGYFPENVKAM), 33–55 (TSLRWLKLNRTGLCYLPEELAAL), 56–78 (QKLEHLSVSHNNLTTLHGELSSL), 80–103 (SLRAIVARANSLKNSGVPDDIFKL), 104–126 (DDLSVLDLSHNQLTECPRELENA), 127–149 (KNMLVLNLSHNSIDTIPNQLFIN), 150–173 (LTDLLYLDLSENRLESLPPQMRRL), 175–196 (HLQTLVLNGNPLLHAQLRQLPA), 197–222 (MTALQTLHLRSTQRTQSNLPTSLEGL), 223–245 (SNLADVDLSCNDLTRVPECLYTL), 247–268 (SLRRLNLSSNQITELSLCIDQW), 269–291 (VHVETLNLSRNQLTSLPSAICKL), 293–316 (KLKKLYLNSNKLDFDGLPSGIGKL), 318–339 (NLEEFMAANNNLELVPESLCRC), 340–363 (PKLRKLVLNKNHLVTLPEAIHFLT), and 365–385 (IEVLDVRENPNLVMPPKPADR). N6-acetyllysine is present on Lys-21. Ser-406 is subject to Phosphoserine. Residue Ser-436 is modified to Phosphoserine; by SGK3. A disordered region spans residues 452–473 (VAQEKNKKQEESADARAPSGKV). Residues 453–465 (AQEKNKKQEESAD) are compositionally biased toward basic and acidic residues. The segment at 495–827 (VGQLPGLTIW…TVSRSLEGTE (333 aa)) is interaction with ACTL6A. 3 Gelsolin-like repeats span residues 509-591 (FVPV…EEFL), 629-703 (NIKL…PEFW), and 758-831 (ELMP…AQVF). Thr-818 is modified (phosphothreonine; by SGK3). Phosphoserine is present on residues Ser-856 and Ser-860. Residues 951 to 975 (KKEDKEEKAEGKEGEEATAEAEEKQ) are disordered. Basic and acidic residues predominate over residues 952–965 (KEDKEEKAEGKEGE). Residues 966-975 (EATAEAEEKQ) are compositionally biased toward acidic residues. 2 Gelsolin-like repeats span residues 1075–1143 (TDSS…PENF) and 1181–1254 (KCSD…QHAF).

As to quaternary structure, interacts with actin, ACTL6A, NCOA2 and CARM1. Interacts with LRRFIP1, LRRFIP2 and MYD88. Upon LPS stimulation, LRRFIP2 competes for MYD88-binding. LRRFIP1 constitutively blocks the interaction with MyD88, even in the absence of LPS. Interacts with the nuclear receptors ESR1 and THRB. Interacts with SGK3. Interacts (via the gelsolin-like region) with TMOD1. Interacts with (via the gelsolin-like region) TMOD3. Interacts with LMOD2, VCL, GSN and DES. In terms of tissue distribution, strongest expression in skeletal muscle with high expression also in the heart and lung.

The protein localises to the nucleus. The protein resides in the cytoplasm. Its subcellular location is the cytoskeleton. It is found in the microtubule organizing center. It localises to the centrosome. The protein localises to the cell projection. The protein resides in the podosome. Its subcellular location is the cell junction. It is found in the focal adhesion. Is a regulator of actin polymerization, required for proper myofibril organization and regulation of the length of sarcomeric thin filaments. It also plays a role in the assembly of cardiomyocyte cell adhesion complexes. Regulates cytoskeletal rearrangements involved in cytokinesis and cell migration, by inhibiting Rac1-dependent paxillin phosphorylation. May play a role as coactivator in transcriptional activation by hormone-activated nuclear receptors (NR) and acts in cooperation with NCOA2 and CARM1. Involved in estrogen hormone signaling. The sequence is that of Protein flightless-1 homolog (FLII) from Homo sapiens (Human).